A 422-amino-acid polypeptide reads, in one-letter code: Testin (422 aa).

In terms of domain architecture, PET spans 92 to 199 (MILTSPVAAK…GDVKLPKEVE (108 aa)). The interval 135-165 (QPVAGSEGAQYRKKQLAKQLPAHDQDPSKCH) is disordered. Positions 155–165 (PAHDQDPSKCH) are enriched in basic and acidic residues. 3 consecutive LIM zinc-binding domains span residues 234 to 299 (YYCF…SEKP), 300 to 359 (RCAG…NHAV), and 360 to 422 (SCQG…KMSS).

It belongs to the prickle / espinas / testin family.

Its subcellular location is the cytoplasm. The protein localises to the cell cortex. It is found in the cell junction. It localises to the focal adhesion. Scaffold protein that may play a role in cell adhesion, cell spreading and in the reorganization of the actin cytoskeleton. May inhibit cell growth. Regulates cranial neural crest migration. Acts together with prickle1 to control axial elongation. The protein is Testin of Xenopus tropicalis (Western clawed frog).